The following is a 129-amino-acid chain: Lysozyme C, milk isozyme (129 aa).

In terms of domain architecture, C-type lysozyme spans 1–129; sequence KVFSKCELAH…LSEYLASCNL (129 aa). 4 cysteine pairs are disulfide-bonded: cysteine 6–cysteine 127, cysteine 30–cysteine 115, cysteine 65–cysteine 80, and cysteine 76–cysteine 94. Active-site residues include glutamate 35 and aspartate 53. The Ca(2+) site is built by lysine 82, aspartate 85, asparagine 87, aspartate 90, and aspartate 91.

Belongs to the glycosyl hydrolase 22 family. Monomer. The cofactor is Ca(2+).

It carries out the reaction Hydrolysis of (1-&gt;4)-beta-linkages between N-acetylmuramic acid and N-acetyl-D-glucosamine residues in a peptidoglycan and between N-acetyl-D-glucosamine residues in chitodextrins.. In terms of biological role, lysozymes have primarily a bacteriolytic function; those in tissues and body fluids are associated with the monocyte-macrophage system and enhance the activity of immunoagents. In Equus caballus (Horse), this protein is Lysozyme C, milk isozyme (LYZ).